Consider the following 28-residue polypeptide: Grammistin Gs A (28 aa).

This sequence belongs to the grammistin family. Group 3 subfamily. In terms of assembly, exists as aggregates of 3-4 molecules. In terms of tissue distribution, expressed by the skin glands.

The protein localises to the secreted. Its function is as follows. Thanks to its amphiphilic alpha-helice(s), it may integrate into membrane phospholipids, leading to lysis of the membrane. Has no substantial hemolytic activity. Has antibacterial activity with a broad spectrum against various species of bacteria including both Gram-positive and Gram-negative groups. This is Grammistin Gs A from Grammistes sexlineatus (Goldenstriped soapfish).